We begin with the raw amino-acid sequence, 309 residues long: MSQERFPAAPKMSSEKPTSLDAMRATNPCETPIQLLHEFGTKTGNHPVYTLEKAEGQAHNPSFTFRLVIGDITSLGEGPSKKTAKQKAAEFALNILRGDTSKCLPVTDTLRDPKKPPNQMQENPVGSLQELAVQKGWRLPEYTVAQESGPPHKREFTITCRVETFVETGSGTSKQVAKRVAAEKLLTKFKTISTDNIPLNKLIGNKMGCTWDSMRNSSGEKISMLKRSPLSIPNTDYVKMLKDVAEELDFNLTYLDIDELSVNGQYQCLAELSTNPITVCHGTGISCGNAHNDAAHNALQYLKIMCIKK.

The disordered stretch occupies residues 1-22; sequence MSQERFPAAPKMSSEKPTSLDA. 3 DRBM domains span residues 31–98, 123–191, and 236–304; these read TPIQ…ILRG, NPVG…KFKT, and DYVK…YLKI.

This sequence belongs to the PRKRA family. In terms of assembly, homodimer. Interacts with dicer1 and eif2ak2/pkr. Also able to interact with dsRNA.

It localises to the cytoplasm. The protein resides in the perinuclear region. The protein localises to the nucleus. In terms of biological role, activates eif2ak2/pkr in the absence of double-stranded RNA (dsRNA), leading to phosphorylation of eif2s1/efi2-alpha and inhibition of translation and induction of apoptosis. Required for siRNA production by dicer1 and for subsequent siRNA-mediated post-transcriptional gene silencing. Does not seem to be required for processing of pre-miRNA to miRNA by dicer1. The chain is Interferon-inducible double-stranded RNA-dependent protein kinase activator A homolog A (prkra-a) from Xenopus laevis (African clawed frog).